The sequence spans 419 residues: Transcription termination factor Rho (419 aa).

Residues 48–123 (DIFGDGVLEI…LKVNEVNYDK (76 aa)) enclose the Rho RNA-BD domain. 3 RNA-binding regions span residues 61–66 (GFGFLR), 78–80 (DIY), and 108–110 (ERY). Residues 169–174 (GRGQRG), 181–186 (KAGKTM), and Arg212 each bind ATP. Residues 284-288 (VLTGG) are RNA-binding 2.

The protein belongs to the Rho family. In terms of assembly, homohexamer. The homohexamer assembles into an open ring structure.

Facilitates transcription termination by a mechanism that involves Rho binding to the nascent RNA, activation of Rho's RNA-dependent ATPase activity, and release of the mRNA from the DNA template. This chain is Transcription termination factor Rho, found in Salmonella typhi.